Reading from the N-terminus, the 153-residue chain is Cytochrome c oxidase subunit 5A, mitochondrial (153 aa).

The N-terminal 20 residues, 1–20 (MLRNTFTRAGGLSRITSVRF), are a transit peptide targeting the mitochondrion. Topologically, residues 21 to 88 (AQTHALSNAA…EWGPRRPVLN (68 aa)) are mitochondrial matrix. Residues 89 to 111 (KGDSSFIAKGVAAGLLFSVGLFA) form a helical membrane-spanning segment. The Mitochondrial intermembrane portion of the chain corresponds to 112–153 (VVRMAGGQDAKTMNKEWQLKSDEYLKSKNANPWGGYSQVQSK).

It belongs to the cytochrome c oxidase IV family. In terms of assembly, component of the cytochrome c oxidase (complex IV, CIV), a multisubunit enzyme composed of 12 subunits. The complex is composed of a catalytic core of 3 subunits COX1, COX2 and COX3, encoded in the mitochondrial DNA, and 9 supernumerary subunits COX4, COX5A (or COX5B), COX6, COX7, COX8, COX9, COX12, COX13 and COX26, which are encoded in the nuclear genome. COX5A is the predominant subunit V during aerobic/normoxic growth, it gets replaced by COX5B under anaerobic/hypoxic conditions. The complex exists as a monomer or a dimer and forms supercomplexes (SCs) in the inner mitochondrial membrane with a dimer of ubiquinol-cytochrome c oxidoreductase (cytochrome b-c1 complex, complex III, CIII), resulting in 2 different assemblies (supercomplexes III(2)IV and III(2)IV(2)). COX5A interacts with COR1, CYT1 and QCR6 at the CIII-CIV interface.

It localises to the mitochondrion inner membrane. It functions in the pathway energy metabolism; oxidative phosphorylation. Functionally, component of the cytochrome c oxidase, the last enzyme in the mitochondrial electron transport chain which drives oxidative phosphorylation. The respiratory chain contains 3 multisubunit complexes succinate dehydrogenase (complex II, CII), ubiquinol-cytochrome c oxidoreductase (cytochrome b-c1 complex, complex III, CIII) and cytochrome c oxidase (complex IV, CIV), that cooperate to transfer electrons derived from NADH and succinate to molecular oxygen, creating an electrochemical gradient over the inner membrane that drives transmembrane transport and the ATP synthase. Cytochrome c oxidase is the component of the respiratory chain that catalyzes the reduction of oxygen to water. Electrons originating from reduced cytochrome c in the intermembrane space (IMS) are transferred via the dinuclear copper A center (CU(A)) of COX2 and heme A of COX1 to the active site in COX1, a binuclear center (BNC) formed by heme A3 and copper B (CU(B)). The BNC reduces molecular oxygen to 2 water molecules using 4 electrons from cytochrome c in the IMS and 4 protons from the mitochondrial matrix. In Saccharomyces cerevisiae (strain ATCC 204508 / S288c) (Baker's yeast), this protein is Cytochrome c oxidase subunit 5A, mitochondrial (COX5A).